A 236-amino-acid polypeptide reads, in one-letter code: Potassium/proton antiporter CemA (236 aa).

Helical transmembrane passes span Y18 to L38, I114 to A134, L161 to I181, and F196 to I216.

Belongs to the CemA family.

Its subcellular location is the plastid. It localises to the chloroplast inner membrane. The enzyme catalyses K(+)(in) + H(+)(out) = K(+)(out) + H(+)(in). In terms of biological role, contributes to K(+)/H(+) antiport activity by supporting proton efflux to control proton extrusion and homeostasis in chloroplasts in a light-dependent manner to modulate photosynthesis. Prevents excessive induction of non-photochemical quenching (NPQ) under continuous-light conditions. Indirectly promotes efficient inorganic carbon uptake into chloroplasts. The chain is Potassium/proton antiporter CemA from Mesostigma viride (Green alga).